Reading from the N-terminus, the 242-residue chain is Biosynthetic peptidoglycan transglycosylase (242 aa).

A helical membrane pass occupies residues 19–39; that stretch reads ILAALAVFWGGGIALFSVVPV.

Belongs to the glycosyltransferase 51 family.

It is found in the cell inner membrane. It catalyses the reaction [GlcNAc-(1-&gt;4)-Mur2Ac(oyl-L-Ala-gamma-D-Glu-L-Lys-D-Ala-D-Ala)](n)-di-trans,octa-cis-undecaprenyl diphosphate + beta-D-GlcNAc-(1-&gt;4)-Mur2Ac(oyl-L-Ala-gamma-D-Glu-L-Lys-D-Ala-D-Ala)-di-trans,octa-cis-undecaprenyl diphosphate = [GlcNAc-(1-&gt;4)-Mur2Ac(oyl-L-Ala-gamma-D-Glu-L-Lys-D-Ala-D-Ala)](n+1)-di-trans,octa-cis-undecaprenyl diphosphate + di-trans,octa-cis-undecaprenyl diphosphate + H(+). The protein operates within cell wall biogenesis; peptidoglycan biosynthesis. Peptidoglycan polymerase that catalyzes glycan chain elongation from lipid-linked precursors. This chain is Biosynthetic peptidoglycan transglycosylase, found in Salmonella heidelberg (strain SL476).